We begin with the raw amino-acid sequence, 80 residues long: Conotoxin Cl11.2 (80 aa).

Positions 1–19 (MKMSVTFLLILMILPLFTG) are cleaved as a signal peptide. The propeptide occupies 20–41 (EWQSGSRLSALKKRLLEKRLLQ). 4 disulfide bridges follow: cysteine 45–cysteine 59, cysteine 52–cysteine 63, cysteine 58–cysteine 68, and cysteine 62–cysteine 74.

This sequence belongs to the conotoxin I1 superfamily. As to expression, expressed by the venom duct.

It is found in the secreted. The polypeptide is Conotoxin Cl11.2 (Californiconus californicus (California cone)).